The following is a 247-amino-acid chain: uncharacterized protein (247 aa).

An N-acetyltransferase domain is found at 102–247; sequence RSIMSRTNDN…ISEHHYRIKR (146 aa).

It belongs to the acetyltransferase family.

This is an uncharacterized protein from Bacillus subtilis (strain 168).